Consider the following 132-residue polypeptide: Ribosome-binding factor A (132 aa).

The protein belongs to the RbfA family. As to quaternary structure, monomer. Binds 30S ribosomal subunits, but not 50S ribosomal subunits or 70S ribosomes.

Its subcellular location is the cytoplasm. One of several proteins that assist in the late maturation steps of the functional core of the 30S ribosomal subunit. Associates with free 30S ribosomal subunits (but not with 30S subunits that are part of 70S ribosomes or polysomes). Required for efficient processing of 16S rRNA. May interact with the 5'-terminal helix region of 16S rRNA. In Pseudomonas entomophila (strain L48), this protein is Ribosome-binding factor A.